The sequence spans 430 residues: Dihydrolipoyllysine-residue acetyltransferase component of pyruvate dehydrogenase complex (430 aa).

The 76-residue stretch at 2 to 77 (AFEFRLPDIG…VVGDVIVKID (76 aa)) folds into the Lipoyl-binding domain. The residue at position 43 (lysine 43) is an N6-lipoyllysine. The tract at residues 80-122 (DAEDMQFKGHDDDSSSKEEPAKEEAPAEQAPVATQTEEVDENR) is disordered. The span at 84-104 (MQFKGHDDDSSSKEEPAKEEA) shows a compositional bias: basic and acidic residues. A Peripheral subunit-binding (PSBD) domain is found at 125 to 162 (KAMPSVRKYAREKGVNIKAVSGSGKNGRITKEDVDAYL). Residues 165 to 200 (GAPTASNESAASATSEEVAETPAAPAAVTLEGDFPE) form a disordered region. A compositionally biased stretch (low complexity) spans 166 to 193 (APTASNESAASATSEEVAETPAAPAAVT). Histidine 401 is an active-site residue.

Belongs to the 2-oxoacid dehydrogenase family. In terms of assembly, forms a 24-polypeptide structural core with octahedral symmetry. Requires (R)-lipoate as cofactor.

It catalyses the reaction N(6)-[(R)-dihydrolipoyl]-L-lysyl-[protein] + acetyl-CoA = N(6)-[(R)-S(8)-acetyldihydrolipoyl]-L-lysyl-[protein] + CoA. The pyruvate dehydrogenase complex catalyzes the overall conversion of pyruvate to acetyl-CoA and CO(2). It contains multiple copies of three enzymatic components: pyruvate dehydrogenase (E1), dihydrolipoamide acetyltransferase (E2) and lipoamide dehydrogenase (E3). The sequence is that of Dihydrolipoyllysine-residue acetyltransferase component of pyruvate dehydrogenase complex (pdhC) from Staphylococcus aureus (strain COL).